A 491-amino-acid chain; its full sequence is Ketol-acid reductoisomerase (NADP(+)) (491 aa).

Positions 15-208 (AQLGKCRFMG…GGHRAGVLES (194 aa)) constitute a KARI N-terminal Rossmann domain. NADP(+) is bound by residues 45–48 (CGAQ), R68, R76, S78, and 108–110 (DKQ). H132 is an active-site residue. An NADP(+)-binding site is contributed by G158. 2 KARI C-terminal knotted domains span residues 209–344 (SFVA…TAPQ) and 345–484 (YEGK…MTDM). Mg(2+) is bound by residues D217, E221, E389, and E393. Residue S414 coordinates substrate.

This sequence belongs to the ketol-acid reductoisomerase family. The cofactor is Mg(2+).

The enzyme catalyses (2R)-2,3-dihydroxy-3-methylbutanoate + NADP(+) = (2S)-2-acetolactate + NADPH + H(+). It catalyses the reaction (2R,3R)-2,3-dihydroxy-3-methylpentanoate + NADP(+) = (S)-2-ethyl-2-hydroxy-3-oxobutanoate + NADPH + H(+). It participates in amino-acid biosynthesis; L-isoleucine biosynthesis; L-isoleucine from 2-oxobutanoate: step 2/4. The protein operates within amino-acid biosynthesis; L-valine biosynthesis; L-valine from pyruvate: step 2/4. In terms of biological role, involved in the biosynthesis of branched-chain amino acids (BCAA). Catalyzes an alkyl-migration followed by a ketol-acid reduction of (S)-2-acetolactate (S2AL) to yield (R)-2,3-dihydroxy-isovalerate. In the isomerase reaction, S2AL is rearranged via a Mg-dependent methyl migration to produce 3-hydroxy-3-methyl-2-ketobutyrate (HMKB). In the reductase reaction, this 2-ketoacid undergoes a metal-dependent reduction by NADPH to yield (R)-2,3-dihydroxy-isovalerate. This chain is Ketol-acid reductoisomerase (NADP(+)), found in Shigella flexneri.